The sequence spans 459 residues: ATP-dependent RNA helicase me31b (459 aa).

The tract at residues 1 to 267 is recA-like domain 1; that stretch reads MMTEKLNSGH…EINLMEELTL (267 aa). Serine 8 and serine 29 each carry phosphoserine. A Q motif motif is present at residues 58–86; the sequence is NEFEEFCLKRELLMGIFEKGWERPSPIQE. Positions 89–259 constitute a Helicase ATP-binding domain; sequence IPIALSGKDV…EKHLREPYEI (171 aa). 102–109 is a binding site for ATP; sequence AKNGTGKT. The DEAD box signature appears at 207–210; that stretch reads DEAD. Residues 264-431 form a gyf binding region; sequence ELTLKGVTQY…PKVIDPALYV (168 aa). The Helicase C-terminal domain maps to 269-429; the sequence is GVTQYYAFVQ…PIPKVIDPAL (161 aa). Residues 432–459 are recA-like domain 2; the sequence is ANVGASVGDTCNNSDLNNSANEEGNVSK. Serine 450 carries the post-translational modification Phosphoserine.

Belongs to the DEAD box helicase family. DDX6/DHH1 subfamily. Conserved component of different types of multiprotein ribonucleoprotein complexes (RNPs) that form distinct germ granules (P-body, nuage, sponge body or polar granules) and P-body-like neuronal RNPs. Consequently it interacts with a wide variety of proteins, some of which appear to be common interactive partners in almost all RNPs types i.e. cup and tral, whereas other interactions are specific to a germ granule/RNP. Core functional components in me31B-containing RNPs include RNA regulatory proteins (such as translational repressor, RNA-decapping and exonuclease proteins), RNA localization proteins and additional proteins depending on the biological context of the RNPs. In the P-body RNPs, interacts with at least the translation repressor proteins tral, cup and Edc3, and the mRNA localization factor yps. Interaction with tral or Edc3 is required for translation repression and possibly RNA decapping; binding to tral and Edc3 is mutually exclusive. In the nuage and germ plasm polar granule RNPs, interacts with at least tral, cup, and additional proteins required for assembly and function of the germ granules such as tud, vas and aub. Interacts (when dimethylated on Arg residues) with tud; interaction is RNA-independent. Component of the osk RNP complex, which is composed of at least me31B, exu, yps, aret/bruno, cup, and the mRNA of osk. Component of the nanos RNP complex, which is composed of at least smg, cup, tral, me31B, the CCR4-NOT complex members Rga/NOT2 and Caf1-55, and the mRNA of nanos (nos). Interacts with tral and piRNA pathway components papi and AGO3; promotes interaction between nuage RNPs and the piRNA-mediated transposon silencing. Forms a RNP containing at least me31B, eIF4E1, cup, tral and pAbp; this interaction is required for the translational silencing of maternal mRNAs during the maternal-to-zygotic transition. In the sponge body, forms a RNP containing at least me31B, exu, yps and the mRNA of osk; interactions with exu and yps are RNA dependent. Component of a neuronal RNP, at least composed of me31B, tral and Fmr1. Component of the Atx2-Not1 repressor complex, composed of at least me31B, Atx2, tyf and pAbp. Interacts (via the C-terminus) with Atx2, tyf, pAbp and Lsm12a. Interacts (via RecA-like domain 2) with 4EHP-GYF2 complex member Gyf (via the me31B binding motif). Interacts with 4E-T, Edc3 and Patr-1. In terms of processing, symmetrically dimethylated on arginine residues. In terms of tissue distribution, ubiquitously expressed throughout the brain (at protein level). Expressed in the olfactory system including the antennal lobes, projection neurons, local interneurons, mushroom-body Kenyon cells and glial cells (at protein level).

Its subcellular location is the cytoplasm. It localises to the cytoplasmic ribonucleoprotein granule. The protein resides in the P-body. The protein localises to the endoplasmic reticulum. It is found in the cell projection. Its subcellular location is the dendrite. It catalyses the reaction ATP + H2O = ADP + phosphate + H(+). Its function is as follows. ATP-dependent RNA helicase which is a core component of a variety of ribonucleoprotein complexes (RNPs) that play critical roles in translational repression and mRNA decapping during embryogenesis, oogenesis, neurogenesis and neurotransmission. Recruits core components and translational repressors to some RNP complexes, and mediates RNP aggregation into processing granules such as P-bodies. As part of a RNP complex containing tral, eIF4E1, cup, and pAbp, involved in RNP-mediated translational repression of maternal mRNAs during oogenesis and embryogenesis. As part of a RNP complex containing tral and the RNA localization factors exu and yps, mediates translational silencing of mRNAs such as osk/oskar and bcd/bicoid during their transport to the oocyte in order to prevent their translation until they reach their positional destinations. In neurons and possibly imaginal disks, involved in miRNA-mediated translational repression, possibly in association with components of the piRNA transposon silencing pathway. Involved in RNA localization and protein trafficking in the oocyte. As part of an ER-associated RNP containing tral, cup and yps, required for tral-dependent ER exit site formation and consequently efficient trafficking of proteins such as grk and yl through the secretory pathway. Component of neuron RNPs that mediate transport and translation of neuronal RNAs, including translation repression of synaptic transcripts in preparation for their dendritic targeting. As part of the Atx2-Not1 repressor complex promotes Not1-dependent post-transcriptional gene silencing in adult circadian pacemaker neurons in order to sustain high-amplitude circadian rhythms and Pdf cycling in a per-independent manner. Promotes the interaction between Atx2 and Not1 within the Atx2-Not1 RNP complex. Recruited to the 4EHP-GYF2 complex by Gyf, where it plays a role in 4EHP-GYF2 mediated translational repression and mRNA decay. This Drosophila melanogaster (Fruit fly) protein is ATP-dependent RNA helicase me31b (me31B).